Reading from the N-terminus, the 388-residue chain is UDP-4-amino-4-deoxy-L-arabinose--oxoglutarate aminotransferase (388 aa).

Residue Lys-183 is modified to N6-(pyridoxal phosphate)lysine.

It belongs to the DegT/DnrJ/EryC1 family. ArnB subfamily. As to quaternary structure, homodimer. Pyridoxal 5'-phosphate serves as cofactor.

It catalyses the reaction UDP-4-amino-4-deoxy-beta-L-arabinose + 2-oxoglutarate = UDP-beta-L-threo-pentopyranos-4-ulose + L-glutamate. Its pathway is nucleotide-sugar biosynthesis; UDP-4-deoxy-4-formamido-beta-L-arabinose biosynthesis; UDP-4-deoxy-4-formamido-beta-L-arabinose from UDP-alpha-D-glucuronate: step 2/3. The protein operates within bacterial outer membrane biogenesis; lipopolysaccharide biosynthesis. Functionally, catalyzes the conversion of UDP-4-keto-arabinose (UDP-Ara4O) to UDP-4-amino-4-deoxy-L-arabinose (UDP-L-Ara4N). The modified arabinose is attached to lipid A and is required for resistance to polymyxin and cationic antimicrobial peptides. The sequence is that of UDP-4-amino-4-deoxy-L-arabinose--oxoglutarate aminotransferase from Shewanella sediminis (strain HAW-EB3).